We begin with the raw amino-acid sequence, 642 residues long: Threonine--tRNA ligase (642 aa).

A TGS domain is found at 1–61 (MPIITLPDGS…STDSDLSIIT (61 aa)). Positions 243–534 (DHRKIGKQLD…LIEEYAGKFP (292 aa)) are catalytic. Positions 334, 385, and 511 each coordinate Zn(2+).

The protein belongs to the class-II aminoacyl-tRNA synthetase family. As to quaternary structure, homodimer. It depends on Zn(2+) as a cofactor.

The protein resides in the cytoplasm. The enzyme catalyses tRNA(Thr) + L-threonine + ATP = L-threonyl-tRNA(Thr) + AMP + diphosphate + H(+). Catalyzes the attachment of threonine to tRNA(Thr) in a two-step reaction: L-threonine is first activated by ATP to form Thr-AMP and then transferred to the acceptor end of tRNA(Thr). Also edits incorrectly charged L-seryl-tRNA(Thr). This is Threonine--tRNA ligase from Shewanella denitrificans (strain OS217 / ATCC BAA-1090 / DSM 15013).